Reading from the N-terminus, the 218-residue chain is 7-cyano-7-deazaguanine synthase (218 aa).

9–19 contacts ATP; it reads YSGGMDSFTVL. Zn(2+) is bound by residues Cys-185, Cys-193, Cys-196, and Cys-199.

Belongs to the QueC family. The cofactor is Zn(2+).

The catalysed reaction is 7-carboxy-7-deazaguanine + NH4(+) + ATP = 7-cyano-7-deazaguanine + ADP + phosphate + H2O + H(+). It functions in the pathway purine metabolism; 7-cyano-7-deazaguanine biosynthesis. Functionally, catalyzes the ATP-dependent conversion of 7-carboxy-7-deazaguanine (CDG) to 7-cyano-7-deazaguanine (preQ(0)). This Pseudoalteromonas translucida (strain TAC 125) protein is 7-cyano-7-deazaguanine synthase.